Reading from the N-terminus, the 2352-residue chain is Highly reducing polyketide synthase ZEA2 (2352 aa).

The 425-residue stretch at Pro-9–Ala-433 folds into the Ketosynthase family 3 (KS3) domain. Catalysis depends on for beta-ketoacyl synthase activity residues Cys-181, His-316, and His-356. A malonyl-CoA:ACP transacylase (MAT) domain region spans residues Phe-544 to Val-875. Ser-634 (for malonyltransferase activity) is an active-site residue. Residues Arg-923–Asn-1058 are N-terminal hotdog fold. The region spanning Arg-923–Ala-1242 is the PKS/mFAS DH domain. Positions Ile-925–Glu-1237 are dehydratase (DH) domain. His-955 functions as the Proton acceptor; for dehydratase activity in the catalytic mechanism. A C-terminal hotdog fold region spans residues Pro-1086–Ala-1242. The Proton donor; for dehydratase activity role is filled by Asp-1152. Residues Gly-1643–Leu-1955 are enoylreductase (ER) domain. Positions Ala-1979–Asp-2159 are catalytic ketoreductase (KRc) domain. The Carrier domain maps to Lys-2269 to Ser-2346. An O-(pantetheine 4'-phosphoryl)serine modification is found at Ser-2306.

The protein operates within mycotoxin biosynthesis. Functionally, highly reducing polyketide synthase; part of the gene cluster that mediates the biosynthesis of zearalenone (ZEA), a nonsteroid estrogen that is a contaminant of cereal grains and causes estrogenic disorders in humans and animals. The ZEA backbone is synthesized from a single acetyl-CoA molecule and eight malonyl-CoA molecules. The reducing polyketide synthase ZEA2 is proposed to synthesize a reduced hexaketide intermediate by using different combinations of its reductive domains during each round of condensation. The hexaketide thioester is then transacylated to the non-reducing polyketide synthase ZEA1 and is further condensed with three malonyl-CoAs without reductive tailoring to yield a mixed reduced/unreduced nonaketide. ZEA1 must be able to interact with ZEA2 to facilitate starter-unit acyltransfer and initiate polyketide biosynthesis. ZEA1 also mediates the required C2-C7 cyclization to form the resorcylate core and catalyzes the formation of the macrolactone. ZEB1 is then responsible for the chemical conversion of beta-zearalenonol (beta-ZOL) to ZEA in the biosynthetic pathway. This is Highly reducing polyketide synthase ZEA2 from Gibberella zeae (strain ATCC MYA-4620 / CBS 123657 / FGSC 9075 / NRRL 31084 / PH-1) (Wheat head blight fungus).